Here is a 1730-residue protein sequence, read N- to C-terminus: Myosin-7 (1730 aa).

Positions 8–56 (TVGSHVWVEDPDDAWIDGEVEEVNSEEITVNCSGKTVVAKLNNVYPKDP) constitute a Myosin N-terminal SH3-like domain. A Myosin motor domain is found at 61-731 (LGVDDMTKLA…QMAEMDAHRA (671 aa)). ATP contacts are provided by residues 155 to 162 (GESGAGKT) and 208 to 216 (NNNSSRFGK). Actin-binding regions lie at residues 494–528 (LIEK…YQTF), 530–553 (NHKR…AGDV), 588–612 (FPPL…KQQL), and 612–634 (LQSL…KPNN). 4 consecutive IQ domains span residues 757–786 (LQAA…EAAS), 782–811 (REAA…SACS), 831–850 (RRAT…HQRY), and 853–882 (TKKA…AAKE). A coiled-coil region spans residues 883–1224 (TGALQDAKTK…VSDMETAEQI (342 aa)). The 352-residue stretch at 1327-1678 (DRIVPVFGSA…ISNLKLLLTN (352 aa)) folds into the Dilute domain. 2 disordered regions span residues 1367–1387 (QSST…FGRM) and 1456–1520 (DSSV…SSEE). A compositionally biased stretch (low complexity) spans 1456 to 1465 (DSSVVNSPSK). Over residues 1475–1508 (SSEENSPKKSSEENSPKESSGDKSPQKLSDDNSP) the composition is skewed to basic and acidic residues.

Belongs to the TRAFAC class myosin-kinesin ATPase superfamily. Myosin family. Plant myosin class XI subfamily. As to quaternary structure, homodimer.

Its function is as follows. Myosin heavy chain that is required for the cell cycle-regulated transport of various organelles and proteins for their segregation. Functions by binding with its tail domain to receptor proteins on organelles and exerting force with its N-terminal motor domain against actin filaments, thereby transporting its cargo along polarized actin cables. The chain is Myosin-7 (XI-A) from Arabidopsis thaliana (Mouse-ear cress).